The sequence spans 209 residues: FMN-dependent NADH:quinone oxidoreductase (209 aa).

FMN-binding positions include S9 and 15 to 17; that span reads SNS.

It belongs to the azoreductase type 1 family. As to quaternary structure, homodimer. FMN is required as a cofactor.

The enzyme catalyses 2 a quinone + NADH + H(+) = 2 a 1,4-benzosemiquinone + NAD(+). It catalyses the reaction N,N-dimethyl-1,4-phenylenediamine + anthranilate + 2 NAD(+) = 2-(4-dimethylaminophenyl)diazenylbenzoate + 2 NADH + 2 H(+). Quinone reductase that provides resistance to thiol-specific stress caused by electrophilic quinones. In terms of biological role, also exhibits azoreductase activity. Catalyzes the reductive cleavage of the azo bond in aromatic azo compounds to the corresponding amines. This is FMN-dependent NADH:quinone oxidoreductase from Bordetella parapertussis (strain 12822 / ATCC BAA-587 / NCTC 13253).